A 616-amino-acid chain; its full sequence is Spastin (616 aa).

The interval 1 to 44 is disordered; it reads MNSPGGRGKKKGSGGPSSPVPPRPPPPCLASSRPAPRPAPPPQS. Residues 1-50 form a required for nuclear localization region; the sequence is MNSPGGRGKKKGSGGPSSPVPPRPPPPCLASSRPAPRPAPPPQSPHKRNL. Residues 1–56 lie on the Cytoplasmic side of the membrane; sequence MNSPGGRGKKKGSGGPSSPVPPRPPPPCLASSRPAPRPAPPPQSPHKRNLYYFSYP. Positions 1–80 are required for interaction with ATL1; that stretch reads MNSPGGRGKK…LGLLFVWLCQ (80 aa). Positions 1–194 are required for midbody localization; the sequence is MNSPGGRGKK…LVMAKDRLQL (194 aa). Positions 1–300 are required for interaction with RTN1; that stretch reads MNSPGGRGKK…STPKTNRTNK (300 aa). A Nuclear localization signal motif is present at residues 4-11; the sequence is PGGRGKKK. 2 stretches are compositionally biased toward pro residues: residues 18-28 and 35-44; these read SPVPPRPPPPC and APRPAPPPQS. Residues 50–87 are required for interaction with SSNA1 and microtubules; that stretch reads LYYFSYPLFLGFALLRLVAFHLGLLFVWLCQRFSRALM. Residues 57–77 constitute an intramembrane region (helical); the sequence is LFLGFALLRLVAFHLGLLFVW. The Nuclear export signal motif lies at 59–67; sequence LGFALLRLV. At 78 to 616 the chain is on the cytoplasmic side; the sequence is LCQRFSRALM…WNKDFGDTTV (539 aa). The sufficient for interaction with CHMP1B stretch occupies residues 112 to 196; that stretch reads EVERVRAFHK…MAKDRLQLLE (85 aa). The interval 114 to 200 is required for interaction with microtubules; sequence ERVRAFHKQA…RLQLLEKLQP (87 aa). The MIT domain maps to 120–195; the sequence is HKQAFEYISV…VMAKDRLQLL (76 aa). Residues 223-266 form a disordered region; it reads GHLQSESGAVPKRKDPLTHPSNSLPRSKAIMKTGSTGLSGHHRA. Residues 226-328 are sufficient for interaction with microtubules; that stretch reads QSESGAVPKR…NVDSNLANFI (103 aa). The interval 228-616 is sufficient for microtubule severing; the sequence is ESGAVPKRKD…WNKDFGDTTV (389 aa). 2 positions are modified to phosphoserine: Ser245 and Ser268. A required for interaction with microtubules and microtubule severing region spans residues 270 to 328; sequence SGLSIVSGMRQGPGPTTATHKSTPKTNRTNKPSTPTTAPRKKKDLKNFRNVDSNLANFI. Residues 278–311 form a disordered region; the sequence is MRQGPGPTTATHKSTPKTNRTNKPSTPTTAPRKK. Residues 283 to 306 are compositionally biased toward polar residues; sequence GPTTATHKSTPKTNRTNKPSTPTT. Residue Thr306 is modified to Phosphothreonine. The short motif at 309-312 is the Nuclear localization signal element; the sequence is RKKK. The tract at residues 310–312 is required for interaction with microtubules; sequence KKK. 382 to 389 lines the ATP pocket; it reads GPPGNGKT. Phosphoserine is present on Ser597.

It belongs to the AAA ATPase family. Spastin subfamily. In terms of assembly, homohexamer. Mostly monomeric, but assembles into hexameric structure for short periods of time. Oligomerization seems to be a prerequisite for catalytic activity. Binding to ATP in a cleft between two adjacent subunits stabilizes the homohexameric form. Binds to microtubules at least in part via the alpha-tubulin and beta-tubulin tails. The hexamer adopts a ring conformation through which microtubules pass prior to being severed. Does not interact strongly with tubulin heterodimers. Interacts (via MIT domain) with CHMP1B; the interaction is direct. Interacts with SSNA1. Interacts with ATL1. Interacts with RTN1. Interacts with ZFYVE27. Interacts with REEP1. Interacts (via MIT domain) with IST1.

Its subcellular location is the membrane. The protein localises to the endoplasmic reticulum. The protein resides in the midbody. It localises to the cytoplasm. It is found in the cytoskeleton. Its subcellular location is the microtubule organizing center. The protein localises to the centrosome. The protein resides in the perinuclear region. It localises to the nucleus. It is found in the spindle. Its subcellular location is the cell projection. The protein localises to the axon. It catalyses the reaction n ATP + n H2O + a microtubule = n ADP + n phosphate + (n+1) alpha/beta tubulin heterodimers.. With respect to regulation, allosteric enzyme with a cooperative mechanism; at least two neighbor subunits influence each other strongly in spastin hexamers. Microtubule binding promotes cooperative interactions among spastin subunits. Its function is as follows. ATP-dependent microtubule severing protein that specifically recognizes and cuts microtubules that are polyglutamylated. Preferentially recognizes and acts on microtubules decorated with short polyglutamate tails: severing activity increases as the number of glutamates per tubulin rises from one to eight, but decreases beyond this glutamylation threshold. Severing activity is not dependent on tubulin acetylation or detyrosination. Microtubule severing promotes reorganization of cellular microtubule arrays and the release of microtubules from the centrosome following nucleation. It is critical for the biogenesis and maintenance of complex microtubule arrays in axons, spindles and cilia. SPAST is involved in abscission step of cytokinesis and nuclear envelope reassembly during anaphase in cooperation with the ESCRT-III complex. Recruited at the midbody, probably by IST1, and participates in membrane fission during abscission together with the ESCRT-III complex. Recruited to the nuclear membrane by IST1 and mediates microtubule severing, promoting nuclear envelope sealing and mitotic spindle disassembly during late anaphase. Required for membrane traffic from the endoplasmic reticulum (ER) to the Golgi and endosome recycling. Recruited by IST1 to endosomes and regulates early endosomal tubulation and recycling by mediating microtubule severing. Probably plays a role in axon growth and the formation of axonal branches. This Sus scrofa (Pig) protein is Spastin.